The following is a 737-amino-acid chain: Prospero homeobox protein 1 (737 aa).

An interaction with RORG region spans residues 1-28 (MPDHDSTALLSRQTKRRRVDIGVKRTVG). Residues 103–135 (KNGGTEPSFQASGLSSTGSEVHQEDICSNSSRD) are compositionally biased toward polar residues. Residues 103–147 (KNGGTEPSFQASGLSSTGSEVHQEDICSNSSRDSPPECLSPFGRP) form a disordered region. Phosphoserine occurs at positions 177, 179, 199, 291, and 295. The interval 178–221 (HSPSVALRGNENEREMAPQSVSPRESYRENKRKQKLPQQQQQSF) is disordered. A compositionally biased stretch (basic and acidic residues) spans 320-337 (MAENKPKREGSNKERDHG). Disordered stretches follow at residues 320–344 (MAENKPKREGSNKERDHGPNSLQPE) and 444–476 (RKNSSEQSASGPATGGHHQPLHQSPLSATAGFT). A Glycyl lysine isopeptide (Lys-Gly) (interchain with G-Cter in SUMO2) cross-link involves residue Lys324. Over residues 464-476 (LHQSPLSATAGFT) the composition is skewed to polar residues. Ser511 and Ser514 each carry phosphoserine. Residues 525–547 (RTKMSSHHLSHHPCSPAHPPSTA) form a disordered region. The residue at position 557 (Ser557) is a Phosphoserine. A Prospero-type homeo domain is found at 577–635 (QEGLSPNHLKKAKLMFFYTRYPSSNMLKTYFSDVKFNRCITSQLIKWFSNFREFYYIQM). The segment at 577–735 (QEGLSPNHLK…KSPNCLQELL (159 aa)) is homeo-Prospero. The Prospero domain occupies 636-735 (EKYARQAIND…KSPNCLQELL (100 aa)). The tract at residues 723–729 (EIFKSPN) is essential for nuclear localization, interaction with RORG, repression of RORG transcriptional activator activity.

Belongs to the Prospero homeodomain family. Interacts with RORA and RORG (via AF-2 motif). As to expression, expressed in the young neurons of the subventricular region of the CNS, developing eye lens and pancreas. It is also found in the developing liver, heart and skeletal muscle. In the eye, expressed in the lens and retina at postnatal day 10. In the retina, localized to the inner nuclear layer. In the lens, localized to epithelial and fiber cells.

It is found in the nucleus. Its function is as follows. Transcription factor involved in developmental processes such as cell fate determination, gene transcriptional regulation and progenitor cell regulation in a number of organs. Plays a critical role in embryonic development and functions as a key regulatory protein in neurogenesis and the development of the heart, eye lens, liver, pancreas and the lymphatic system. Involved in the regulation of the circadian rhythm. Represses: transcription of the retinoid-related orphan receptor RORG, transcriptional activator activity of RORA and RORG and the expression of RORA/G-target genes including core clock components: BMAL1, NPAS2 and CRY1 and metabolic genes: AVPR1A and ELOVL3. The protein is Prospero homeobox protein 1 (Prox1) of Mus musculus (Mouse).